A 657-amino-acid polypeptide reads, in one-letter code: 9-cis-epoxycarotenoid dioxygenase NCED9, chloroplastic (657 aa).

Positions 357, 406, 471, and 642 each coordinate Fe cation.

It belongs to the carotenoid oxygenase family. The cofactor is Fe(2+). In terms of tissue distribution, expressed in developing siliques, embryo and endosperm.

It localises to the plastid. The protein localises to the chloroplast stroma. It catalyses the reaction a 9-cis-epoxycarotenoid + O2 = a 12'-apo-carotenal + 2-cis,4-trans-xanthoxin. It carries out the reaction 9-cis-violaxanthin + O2 = (3S,5R,6S)-5,6-epoxy-3-hydroxy-5,6-dihydro-12'-apo-beta-caroten-12'-al + 2-cis,4-trans-xanthoxin. The catalysed reaction is 9'-cis-neoxanthin + O2 = (3S,5R,6R)-3,5-dihydroxy-6,7-didehydro-5,6-dihydro-12'-apo-beta-caroten-12'-al + 2-cis,4-trans-xanthoxin. Has a 11,12(11',12') 9-cis epoxycarotenoid cleavage activity. Catalyzes the first step of abscisic-acid biosynthesis from carotenoids. Contributes probably to abscisic acid synthesis for the induction of seed dormancy. This Arabidopsis thaliana (Mouse-ear cress) protein is 9-cis-epoxycarotenoid dioxygenase NCED9, chloroplastic (NCED9).